We begin with the raw amino-acid sequence, 116 residues long: Aspartate 1-decarboxylase (116 aa).

Serine 25 acts as the Schiff-base intermediate with substrate; via pyruvic acid in catalysis. Serine 25 is subject to Pyruvic acid (Ser). Position 57 (threonine 57) interacts with substrate. Catalysis depends on tyrosine 58, which acts as the Proton donor. A substrate-binding site is contributed by 73–75 (GAA).

This sequence belongs to the PanD family. As to quaternary structure, heterooctamer of four alpha and four beta subunits. Requires pyruvate as cofactor. In terms of processing, is synthesized initially as an inactive proenzyme, which is activated by self-cleavage at a specific serine bond to produce a beta-subunit with a hydroxyl group at its C-terminus and an alpha-subunit with a pyruvoyl group at its N-terminus.

The protein resides in the cytoplasm. It catalyses the reaction L-aspartate + H(+) = beta-alanine + CO2. The protein operates within cofactor biosynthesis; (R)-pantothenate biosynthesis; beta-alanine from L-aspartate: step 1/1. Functionally, catalyzes the pyruvoyl-dependent decarboxylation of aspartate to produce beta-alanine. The chain is Aspartate 1-decarboxylase from Leptospira interrogans serogroup Icterohaemorrhagiae serovar copenhageni (strain Fiocruz L1-130).